The following is a 771-amino-acid chain: Probable dipeptidyl peptidase 4 (771 aa).

Residues 1 to 16 (MKYSKLLLLLVSVVQA) form the signal peptide. N37, N80, N114, N173, N222, N470, and N495 each carry an N-linked (GlcNAc...) asparagine glycan. Catalysis depends on charge relay system residues S618, D695, and H730.

The protein belongs to the peptidase S9B family.

It is found in the secreted. It carries out the reaction Release of an N-terminal dipeptide, Xaa-Yaa-|-Zaa-, from a polypeptide, preferentially when Yaa is Pro, provided Zaa is neither Pro nor hydroxyproline.. Extracellular dipeptidyl-peptidase which removes N-terminal dipeptides sequentially from polypeptides having unsubstituted N-termini provided that the penultimate residue is proline. This Aspergillus flavus (strain ATCC 200026 / FGSC A1120 / IAM 13836 / NRRL 3357 / JCM 12722 / SRRC 167) protein is Probable dipeptidyl peptidase 4 (dpp4).